A 125-amino-acid chain; its full sequence is Ribonuclease pancreatic (125 aa).

Substrate is bound by residues lysine 7 and arginine 10. Catalysis depends on histidine 12, which acts as the Proton acceptor. 4 disulfide bridges follow: cysteine 27–cysteine 85, cysteine 41–cysteine 96, cysteine 59–cysteine 111, and cysteine 66–cysteine 73. The N-linked (GlcNAc...) asparagine glycan is linked to asparagine 35. Substrate-binding positions include 42–46 (KPVNT), lysine 67, and arginine 86. The active-site Proton donor is histidine 120.

It belongs to the pancreatic ribonuclease family. In terms of assembly, monomer. Interacts with and forms tight 1:1 complexes with RNH1. Dimerization of two such complexes may occur. Interaction with RNH1 inhibits this protein. As to expression, pancreas.

It is found in the secreted. It carries out the reaction an [RNA] containing cytidine + H2O = an [RNA]-3'-cytidine-3'-phosphate + a 5'-hydroxy-ribonucleotide-3'-[RNA].. It catalyses the reaction an [RNA] containing uridine + H2O = an [RNA]-3'-uridine-3'-phosphate + a 5'-hydroxy-ribonucleotide-3'-[RNA].. Its function is as follows. Endonuclease that catalyzes the cleavage of RNA on the 3' side of pyrimidine nucleotides. Acts on single-stranded and double-stranded RNA. The chain is Ribonuclease pancreatic (RNASE1) from Spalax ehrenbergi (Middle East blind mole rat).